The chain runs to 383 residues: MQFVLHKTASGVTRARRGTVHLNHGDVQTPAFMPVGTYGTVKGMLPRDIEAIGADIILGNTFHLWLRPGTDIIDKFGGLHKFMHWDKPILTDSGGFQVFSLGAMRKITEEGVTFKSPIDGAKVFLSPEKSMQIQYSLNSDIVMQFDECTPYPATHDEAKKSLELSLRWGQRCVDEHKNLGSTNALFGIIQGSMYADLRKQSLEGLLEIGFDGYAIGGLSVGEPKEEMIDVLDYIADDMPADKPRYLMGVGKPEDLVEGVRRGVDMFDCVMPTRNARNGHYFVTGDADNAGVVRIRNSQYRTDEGPLDPECDCYTCQNFSRAYLSHLNKCKEMLGAQLATIHNLRYYQRLMQNIRDAIEQDKFDEFVNEFYSKRGQTVPELNLR.

The active-site Proton acceptor is the Asp-92. Substrate-binding positions include 92-96, Asp-146, Gln-190, and Gly-217; that span reads DSGGF. The interval 248-254 is RNA binding; that stretch reads GVGKPED. The active-site Nucleophile is the Asp-267. The tract at residues 272 to 276 is RNA binding; important for wobble base 34 recognition; sequence TRNAR. Residues Cys-310, Cys-312, Cys-315, and His-341 each coordinate Zn(2+).

It belongs to the queuine tRNA-ribosyltransferase family. In terms of assembly, homodimer. Within each dimer, one monomer is responsible for RNA recognition and catalysis, while the other monomer binds to the replacement base PreQ1. It depends on Zn(2+) as a cofactor.

The enzyme catalyses 7-aminomethyl-7-carbaguanine + guanosine(34) in tRNA = 7-aminomethyl-7-carbaguanosine(34) in tRNA + guanine. The protein operates within tRNA modification; tRNA-queuosine biosynthesis. Catalyzes the base-exchange of a guanine (G) residue with the queuine precursor 7-aminomethyl-7-deazaguanine (PreQ1) at position 34 (anticodon wobble position) in tRNAs with GU(N) anticodons (tRNA-Asp, -Asn, -His and -Tyr). Catalysis occurs through a double-displacement mechanism. The nucleophile active site attacks the C1' of nucleotide 34 to detach the guanine base from the RNA, forming a covalent enzyme-RNA intermediate. The proton acceptor active site deprotonates the incoming PreQ1, allowing a nucleophilic attack on the C1' of the ribose to form the product. After dissociation, two additional enzymatic reactions on the tRNA convert PreQ1 to queuine (Q), resulting in the hypermodified nucleoside queuosine (7-(((4,5-cis-dihydroxy-2-cyclopenten-1-yl)amino)methyl)-7-deazaguanosine). In Psychrobacter cryohalolentis (strain ATCC BAA-1226 / DSM 17306 / VKM B-2378 / K5), this protein is Queuine tRNA-ribosyltransferase.